We begin with the raw amino-acid sequence, 421 residues long: Serine hydroxymethyltransferase (421 aa).

Residues Leu-118 and 122-124 (GHL) each bind (6S)-5,6,7,8-tetrahydrofolate. Lys-226 carries the post-translational modification N6-(pyridoxal phosphate)lysine.

It belongs to the SHMT family. Homodimer. The cofactor is pyridoxal 5'-phosphate.

The protein resides in the cytoplasm. It carries out the reaction (6R)-5,10-methylene-5,6,7,8-tetrahydrofolate + glycine + H2O = (6S)-5,6,7,8-tetrahydrofolate + L-serine. Its pathway is one-carbon metabolism; tetrahydrofolate interconversion. It functions in the pathway amino-acid biosynthesis; glycine biosynthesis; glycine from L-serine: step 1/1. Functionally, catalyzes the reversible interconversion of serine and glycine with tetrahydrofolate (THF) serving as the one-carbon carrier. This reaction serves as the major source of one-carbon groups required for the biosynthesis of purines, thymidylate, methionine, and other important biomolecules. Also exhibits THF-independent aldolase activity toward beta-hydroxyamino acids, producing glycine and aldehydes, via a retro-aldol mechanism. This is Serine hydroxymethyltransferase from Mycoplasmopsis agalactiae (strain NCTC 10123 / CIP 59.7 / PG2) (Mycoplasma agalactiae).